The chain runs to 335 residues: Lipase chaperone (335 aa).

Residues 7–23 form a helical membrane-spanning segment; sequence LLPLAIALGLGFFIARP.

The protein belongs to the lipase chaperone family.

It localises to the cell inner membrane. Functionally, may be involved in the folding of the extracellular lipase during its passage through the periplasm. This chain is Lipase chaperone (lifO), found in Ectopseudomonas mendocina (Pseudomonas mendocina).